Reading from the N-terminus, the 36-residue chain is Photosystem II reaction center protein M (36 aa).

The chain crosses the membrane as a helical span at residues 5–25; it reads ILAFIATALFILVPTAFLLII.

The protein belongs to the PsbM family. As to quaternary structure, PSII is composed of 1 copy each of membrane proteins PsbA, PsbB, PsbC, PsbD, PsbE, PsbF, PsbH, PsbI, PsbJ, PsbK, PsbL, PsbM, PsbT, PsbX, PsbY, PsbZ, Psb30/Ycf12, at least 3 peripheral proteins of the oxygen-evolving complex and a large number of cofactors. It forms dimeric complexes.

The protein resides in the plastid. Its subcellular location is the chloroplast thylakoid membrane. One of the components of the core complex of photosystem II (PSII). PSII is a light-driven water:plastoquinone oxidoreductase that uses light energy to abstract electrons from H(2)O, generating O(2) and a proton gradient subsequently used for ATP formation. It consists of a core antenna complex that captures photons, and an electron transfer chain that converts photonic excitation into a charge separation. This subunit is found at the monomer-monomer interface. The chain is Photosystem II reaction center protein M from Panax ginseng (Korean ginseng).